A 1450-amino-acid polypeptide reads, in one-letter code: Inactive serine/threonine-protein kinase TEX14 (1450 aa).

ANK repeat units follow at residues 27–54 (LHEYAKQGNCVKLKKILKKGVCVDAVNT), 55–84 (QGQSALFVAALLGHVKLVDVLVDYGSDPNH), and 88–117 (DGSTPVHAAAFSGNQWILSKLLTAGGDLRL). Residues Ser-175 and Ser-186 each carry the phosphoserine modification. The 314-residue stretch at 199-512 (IISAQNIYSF…ILKNDLKEFI (314 aa)) folds into the Protein kinase domain. Residues 205 to 213 (IYSFGFGKF) and Lys-267 each bind ATP. Ser-431 is subject to Phosphoserine; by PLK1. Ser-561 and Ser-662 each carry phosphoserine. The tract at residues 700-720 (SDSLGSLNLPEPTREAKGKTS) is disordered. Residues 791 to 797 (GPPSLAY) carry the GPPX3Y motif. Disordered stretches follow at residues 852 to 906 (VSEE…MASV), 947 to 977 (PPWNPQSSAPFESKVENESTPLPRPPIRGPE), 992 to 1012 (DEPKGNTKFGKMDNSDCDKNK), and 1035 to 1062 (QPEQNEASQASCDTSVGTEKFYSTSSPI). Polar residues-rich tracts occupy residues 875–886 (KQSTGEQLPSTQ) and 894–906 (KNTNQNSRSMASV). Positions 889 to 897 (RESLEKNTN) match the D-box motif. The segment covering 992 to 1011 (DEPKGNTKFGKMDNSDCDKN) has biased composition (basic and acidic residues). Residues 1038–1061 (QNEASQASCDTSVGTEKFYSTSSP) show a composition bias toward polar residues. Residues Ser-1060 and Ser-1221 each carry the phosphoserine modification. 2 disordered regions span residues 1261-1282 (THATKRKSLPRELAEATSQQHL) and 1300-1418 (KQQQ…SLGT). Polar residues-rich tracts occupy residues 1300-1311 (KQQQVSSLASHE) and 1332-1344 (TNSSKDSSFLSSR). Phosphoserine occurs at positions 1357 and 1358. Composition is skewed to basic and acidic residues over residues 1383-1397 (STREKKNKDQDVVEQ) and 1404-1413 (SIKPERRESD). A phosphoserine mark is found at Ser-1412 and Ser-1449.

It belongs to the protein kinase superfamily. In terms of assembly, interacts with KIF23 and RBM44. Interacts with CEP55; inhibiting interaction between CEP55 and PDCD6IP/ALIX and TSG101. Phosphorylated on Thr residues by CDK1 during early phases of mitosis, promoting the interaction with PLK1 and recruitment to kinetochores. Phosphorylated on Ser-431 by PLK1 during late prometaphase promotes the rapid depletion from kinetochores and its subsequent degradation by the APC/C complex. As to expression, detected in testis and spermatogonia. Not detectable in the other tissues tested.

The protein localises to the cytoplasm. It localises to the midbody. It is found in the chromosome. Its subcellular location is the centromere. The protein resides in the kinetochore. Its function is as follows. Required both for the formation of intercellular bridges during meiosis and for kinetochore-microtubule attachment during mitosis. Intercellular bridges are evolutionarily conserved structures that connect differentiating germ cells and are required for spermatogenesis and male fertility. Acts by promoting the conversion of midbodies into intercellular bridges via its interaction with CEP55: interaction with CEP55 inhibits the interaction between CEP55 and PDCD6IP/ALIX and TSG101, blocking cell abscission and leading to transform midbodies into intercellular bridges. Also plays a role during mitosis: recruited to kinetochores by PLK1 during early mitosis and regulates the maturation of the outer kinetochores and microtubule attachment. Has no protein kinase activity in vitro. The polypeptide is Inactive serine/threonine-protein kinase TEX14 (Tex14) (Mus musculus (Mouse)).